The chain runs to 156 residues: Cellulose synthase operon protein D (156 aa).

It participates in glycan metabolism; bacterial cellulose biosynthesis. In terms of biological role, may have a major role in the perfection of crystallization, involved either in the pore structure itself or in the organization of the pores within the linear array of terminal synthesizing complexes (TCs). The polypeptide is Cellulose synthase operon protein D (bcsDI) (Komagataeibacter xylinus (Gluconacetobacter xylinus)).